A 692-amino-acid polypeptide reads, in one-letter code: Glycine--tRNA ligase beta subunit (692 aa).

This sequence belongs to the class-II aminoacyl-tRNA synthetase family. Tetramer of two alpha and two beta subunits.

It is found in the cytoplasm. It carries out the reaction tRNA(Gly) + glycine + ATP = glycyl-tRNA(Gly) + AMP + diphosphate. This is Glycine--tRNA ligase beta subunit from Oceanobacillus iheyensis (strain DSM 14371 / CIP 107618 / JCM 11309 / KCTC 3954 / HTE831).